The sequence spans 525 residues: UPF0288 protein MA_3997 (525 aa).

The protein belongs to the UPF0288 family.

The protein is UPF0288 protein MA_3997 of Methanosarcina acetivorans (strain ATCC 35395 / DSM 2834 / JCM 12185 / C2A).